We begin with the raw amino-acid sequence, 202 residues long: Large ribosomal subunit protein eL13 (202 aa).

The tract at residues 183–202 (GIREKRAKEKAEAEAEKAKK) is disordered.

Belongs to the eukaryotic ribosomal protein eL13 family. As to quaternary structure, component of the large ribosomal subunit. Mature ribosomes consist of a small (40S) and a large (60S) subunit. The 40S subunit contains about 32 different proteins and 1 molecule of RNA (18S). The 60S subunit contains 45 different proteins and 3 molecules of RNA (25S, 5.8S and 5S).

The protein resides in the cytoplasm. In terms of biological role, component of the ribosome, a large ribonucleoprotein complex responsible for the synthesis of proteins in the cell. The small ribosomal subunit (SSU) binds messenger RNAs (mRNAs) and translates the encoded message by selecting cognate aminoacyl-transfer RNA (tRNA) molecules. The large subunit (LSU) contains the ribosomal catalytic site termed the peptidyl transferase center (PTC), which catalyzes the formation of peptide bonds, thereby polymerizing the amino acids delivered by tRNAs into a polypeptide chain. The nascent polypeptides leave the ribosome through a tunnel in the LSU and interact with protein factors that function in enzymatic processing, targeting, and the membrane insertion of nascent chains at the exit of the ribosomal tunnel. This chain is Large ribosomal subunit protein eL13, found in Candida albicans (strain SC5314 / ATCC MYA-2876) (Yeast).